A 201-amino-acid polypeptide reads, in one-letter code: Beta-lactamase inhibitory protein (201 aa).

The N-terminal stretch at Met1 to Ala36 is a signal peptide. Repeat copies occupy residues Ala37–Leu112 and Ala116–Val201. 2 disulfide bridges follow: Cys66–Cys78 and Cys145–Cys167.

In terms of assembly, interacts with E.coli beta-lactamase TEM-1; interaction inhibits hydrolysis of beta-lactam antibiotics. Interacts with K.pneumoniae beta-lactamase SHV-1. Interacts with K.pneumoniae beta-lactamases KPC-2 and KPC-3; interaction inhibits hydrolysis of beta-lactam antibiotics. Interacts with E.coli beta-lactamases CTX-M-14 and CTX-M-15; interaction inhibits hydrolysis of beta-lactam antibiotics.

It localises to the secreted. In terms of biological role, inhibits a wide variety of beta lactamases. The polypeptide is Beta-lactamase inhibitory protein (Streptomyces clavuligerus).